A 262-amino-acid chain; its full sequence is Cytochrome c oxidase subunit 3 (262 aa).

7 helical membrane-spanning segments follow: residues 16–36, 39–59, 83–103, 128–148, 160–180, 198–218, and 241–261; these read PWPY…VVYF, SQTW…IVWW, GMLL…WAFF, FSVP…VTWA, AING…LQAM, FFVA…FLAV, and WYWH…YWWG.

It belongs to the cytochrome c oxidase subunit 3 family. As to quaternary structure, component of the cytochrome c oxidase (complex IV, CIV), a multisubunit enzyme composed of a catalytic core of 3 subunits and several supernumerary subunits. The complex exists as a monomer or a dimer and forms supercomplexes (SCs) in the inner mitochondrial membrane with ubiquinol-cytochrome c oxidoreductase (cytochrome b-c1 complex, complex III, CIII).

The protein localises to the mitochondrion inner membrane. It catalyses the reaction 4 Fe(II)-[cytochrome c] + O2 + 8 H(+)(in) = 4 Fe(III)-[cytochrome c] + 2 H2O + 4 H(+)(out). Its function is as follows. Component of the cytochrome c oxidase, the last enzyme in the mitochondrial electron transport chain which drives oxidative phosphorylation. The respiratory chain contains 3 multisubunit complexes succinate dehydrogenase (complex II, CII), ubiquinol-cytochrome c oxidoreductase (cytochrome b-c1 complex, complex III, CIII) and cytochrome c oxidase (complex IV, CIV), that cooperate to transfer electrons derived from NADH and succinate to molecular oxygen, creating an electrochemical gradient over the inner membrane that drives transmembrane transport and the ATP synthase. Cytochrome c oxidase is the component of the respiratory chain that catalyzes the reduction of oxygen to water. Electrons originating from reduced cytochrome c in the intermembrane space (IMS) are transferred via the dinuclear copper A center (CU(A)) of subunit 2 and heme A of subunit 1 to the active site in subunit 1, a binuclear center (BNC) formed by heme A3 and copper B (CU(B)). The BNC reduces molecular oxygen to 2 water molecules using 4 electrons from cytochrome c in the IMS and 4 protons from the mitochondrial matrix. The sequence is that of Cytochrome c oxidase subunit 3 (COIII) from Metridium senile (Brown sea anemone).